A 122-amino-acid chain; its full sequence is S-adenosylmethionine decarboxylase proenzyme (122 aa).

Serine 69 acts as the Schiff-base intermediate with substrate; via pyruvic acid in catalysis. Serine 69 is modified (pyruvic acid (Ser); by autocatalysis). Residue histidine 74 is the Proton acceptor; for processing activity of the active site. Residue cysteine 89 is the Proton donor; for catalytic activity of the active site.

This sequence belongs to the prokaryotic AdoMetDC family. Type 1 subfamily. Heterotetramer of two alpha and two beta chains arranged as a dimer of alpha/beta heterodimers. The cofactor is pyruvate. Is synthesized initially as an inactive proenzyme. Formation of the active enzyme involves a self-maturation process in which the active site pyruvoyl group is generated from an internal serine residue via an autocatalytic post-translational modification. Two non-identical subunits are generated from the proenzyme in this reaction, and the pyruvate is formed at the N-terminus of the alpha chain, which is derived from the carboxyl end of the proenzyme. The post-translation cleavage follows an unusual pathway, termed non-hydrolytic serinolysis, in which the side chain hydroxyl group of the serine supplies its oxygen atom to form the C-terminus of the beta chain, while the remainder of the serine residue undergoes an oxidative deamination to produce ammonia and the pyruvoyl group blocking the N-terminus of the alpha chain.

The enzyme catalyses S-adenosyl-L-methionine + H(+) = S-adenosyl 3-(methylsulfanyl)propylamine + CO2. The protein operates within amine and polyamine biosynthesis; S-adenosylmethioninamine biosynthesis; S-adenosylmethioninamine from S-adenosyl-L-methionine: step 1/1. Functionally, catalyzes the decarboxylation of S-adenosylmethionine to S-adenosylmethioninamine (dcAdoMet), the propylamine donor required for the synthesis of the polyamines spermine and spermidine from the diamine putrescine. This is S-adenosylmethionine decarboxylase proenzyme from Sulfolobus acidocaldarius (strain ATCC 33909 / DSM 639 / JCM 8929 / NBRC 15157 / NCIMB 11770).